A 368-amino-acid chain; its full sequence is Histidinol-phosphate aminotransferase (368 aa).

At Lys-226 the chain carries N6-(pyridoxal phosphate)lysine.

The protein belongs to the class-II pyridoxal-phosphate-dependent aminotransferase family. Histidinol-phosphate aminotransferase subfamily. Homodimer. Pyridoxal 5'-phosphate serves as cofactor.

It catalyses the reaction L-histidinol phosphate + 2-oxoglutarate = 3-(imidazol-4-yl)-2-oxopropyl phosphate + L-glutamate. Its pathway is amino-acid biosynthesis; L-histidine biosynthesis; L-histidine from 5-phospho-alpha-D-ribose 1-diphosphate: step 7/9. The protein is Histidinol-phosphate aminotransferase of Colwellia psychrerythraea (strain 34H / ATCC BAA-681) (Vibrio psychroerythus).